A 189-amino-acid chain; its full sequence is Peptidyl-tRNA hydrolase (189 aa).

Tyr-14 lines the tRNA pocket. The active-site Proton acceptor is His-19. Positions 64, 66, and 112 each coordinate tRNA.

Belongs to the PTH family. In terms of assembly, monomer.

It is found in the cytoplasm. It carries out the reaction an N-acyl-L-alpha-aminoacyl-tRNA + H2O = an N-acyl-L-amino acid + a tRNA + H(+). In terms of biological role, hydrolyzes ribosome-free peptidyl-tRNAs (with 1 or more amino acids incorporated), which drop off the ribosome during protein synthesis, or as a result of ribosome stalling. Its function is as follows. Catalyzes the release of premature peptidyl moieties from peptidyl-tRNA molecules trapped in stalled 50S ribosomal subunits, and thus maintains levels of free tRNAs and 50S ribosomes. The polypeptide is Peptidyl-tRNA hydrolase (Clostridium botulinum (strain Langeland / NCTC 10281 / Type F)).